The primary structure comprises 537 residues: CTP synthase (537 aa).

An amidoligase domain region spans residues 1-265 (MVHFIFVTGG…DNKVLKFFNI (265 aa)). Position 13 (serine 13) interacts with CTP. Position 13 (serine 13) interacts with UTP. ATP-binding positions include 14–19 (SLGKGL) and aspartate 71. Aspartate 71 and glutamate 139 together coordinate Mg(2+). CTP is bound by residues 146–148 (DIE) and lysine 222. Lysine 222 is a UTP binding site. Residues 290 to 536 (RIAIIAKYHK…IKAAIEYNKC (247 aa)) form the Glutamine amidotransferase type-1 domain. Glycine 352 contacts L-glutamine. Cysteine 379 (nucleophile; for glutamine hydrolysis) is an active-site residue. Residues 380–383 (FGMQ), glutamate 403, and arginine 464 contribute to the L-glutamine site. Residues histidine 509 and glutamate 511 contribute to the active site.

Belongs to the CTP synthase family. Homotetramer.

It catalyses the reaction UTP + L-glutamine + ATP + H2O = CTP + L-glutamate + ADP + phosphate + 2 H(+). The enzyme catalyses L-glutamine + H2O = L-glutamate + NH4(+). It carries out the reaction UTP + NH4(+) + ATP = CTP + ADP + phosphate + 2 H(+). It participates in pyrimidine metabolism; CTP biosynthesis via de novo pathway; CTP from UDP: step 2/2. Allosterically activated by GTP, when glutamine is the substrate; GTP has no effect on the reaction when ammonia is the substrate. The allosteric effector GTP functions by stabilizing the protein conformation that binds the tetrahedral intermediate(s) formed during glutamine hydrolysis. Inhibited by the product CTP, via allosteric rather than competitive inhibition. Functionally, catalyzes the ATP-dependent amination of UTP to CTP with either L-glutamine or ammonia as the source of nitrogen. Regulates intracellular CTP levels through interactions with the four ribonucleotide triphosphates. In Rickettsia peacockii (strain Rustic), this protein is CTP synthase.